A 543-amino-acid chain; its full sequence is Cytochrome P450 1B1 (543 aa).

Cys-470 contacts heme.

The protein belongs to the cytochrome P450 family. Heme is required as a cofactor. Constitutively expressed in retinal and kidney pericytes cells. Expressed in retinal endothelial cells (at protein level). Expressed in cardiac, pulmonary and aortic endothelial cells. Constitutively expressed in trabecular meshwork of the eye (at protein level).

It localises to the endoplasmic reticulum membrane. It is found in the microsome membrane. Its subcellular location is the mitochondrion. The enzyme catalyses an organic molecule + reduced [NADPH--hemoprotein reductase] + O2 = an alcohol + oxidized [NADPH--hemoprotein reductase] + H2O + H(+). It carries out the reaction 17beta-estradiol + reduced [NADPH--hemoprotein reductase] + O2 = 2-hydroxy-17beta-estradiol + oxidized [NADPH--hemoprotein reductase] + H2O + H(+). It catalyses the reaction 17beta-estradiol + reduced [NADPH--hemoprotein reductase] + O2 = 4-hydroxy-17beta-estradiol + oxidized [NADPH--hemoprotein reductase] + H2O + H(+). The catalysed reaction is estrone + reduced [NADPH--hemoprotein reductase] + O2 = 2-hydroxyestrone + oxidized [NADPH--hemoprotein reductase] + H2O + H(+). The enzyme catalyses estrone + reduced [NADPH--hemoprotein reductase] + O2 = 4-hydroxyestrone + oxidized [NADPH--hemoprotein reductase] + H2O + H(+). It carries out the reaction testosterone + reduced [NADPH--hemoprotein reductase] + O2 = 6beta,17beta-dihydroxyandrost-4-en-3-one + oxidized [NADPH--hemoprotein reductase] + H2O + H(+). It catalyses the reaction progesterone + reduced [NADPH--hemoprotein reductase] + O2 = 6beta-hydroxyprogesterone + oxidized [NADPH--hemoprotein reductase] + H2O + H(+). The catalysed reaction is progesterone + reduced [NADPH--hemoprotein reductase] + O2 = 16alpha-hydroxyprogesterone + oxidized [NADPH--hemoprotein reductase] + H2O + H(+). The enzyme catalyses all-trans-retinol + reduced [NADPH--hemoprotein reductase] + O2 = all-trans-retinal + oxidized [NADPH--hemoprotein reductase] + 2 H2O + H(+). It carries out the reaction all-trans-retinal + reduced [NADPH--hemoprotein reductase] + O2 = all-trans-retinoate + oxidized [NADPH--hemoprotein reductase] + H2O + 2 H(+). It catalyses the reaction (5Z,8Z,11Z,14Z)-eicosatetraenoate + reduced [NADPH--hemoprotein reductase] + O2 = (8R,9S)-epoxy-(5Z,11Z,14Z)-eicosatrienoate + oxidized [NADPH--hemoprotein reductase] + H2O + H(+). The catalysed reaction is (5Z,8Z,11Z,14Z)-eicosatetraenoate + reduced [NADPH--hemoprotein reductase] + O2 = (11R,12S)-epoxy-(5Z,8Z,14Z)-eicosatrienoate + oxidized [NADPH--hemoprotein reductase] + H2O + H(+). The enzyme catalyses (5Z,8Z,11Z,14Z)-eicosatetraenoate + reduced [NADPH--hemoprotein reductase] + O2 = (11S,12R)-epoxy-(5Z,8Z,14Z)-eicosatrienoate + oxidized [NADPH--hemoprotein reductase] + H2O + H(+). It carries out the reaction (5Z,8Z,11Z,14Z)-eicosatetraenoate + reduced [NADPH--hemoprotein reductase] + O2 = (14R,15S)-epoxy-(5Z,8Z,11Z)-eicosatrienoate + oxidized [NADPH--hemoprotein reductase] + H2O + H(+). It catalyses the reaction (5S)-hydroperoxy-(6E,8Z,11Z,14Z)-eicosatetraenoate = 5-oxo-(6E,8Z,11Z,14Z)-eicosatetraenoate + H2O. The catalysed reaction is (12S)-hydroperoxy-(5Z,8Z,10E,14Z)-eicosatetraenoate = 12-oxo-(5Z,8Z,10E,14Z)-eicosatetraenoate + H2O. The enzyme catalyses (13S)-hydroperoxy-(9Z,11E)-octadecadienoate = 13-oxo-(9Z,11E)-octadecadienoate + H2O. It carries out the reaction (15S)-hydroperoxy-(5Z,8Z,11Z,13E)-eicosatetraenoate = 15-oxo-(5Z,8Z,11Z,13E)-eicosatetraenoate + H2O. Its pathway is steroid hormone biosynthesis. It functions in the pathway cofactor metabolism; retinol metabolism. It participates in lipid metabolism; arachidonate metabolism. Its activity is regulated as follows. Enzyme activity is increased by cytochrome b5. Enzyme activity is increased by liposomes containing anionic phospholipids, phosphatidic acid and cardiolipin. Inhibited by naringenin with an IC(50) of 5 uM. A cytochrome P450 monooxygenase involved in the metabolism of various endogenous substrates, including fatty acids, steroid hormones and vitamins. Mechanistically, uses molecular oxygen inserting one oxygen atom into a substrate, and reducing the second into a water molecule, with two electrons provided by NADPH via cytochrome P450 reductase (NADPH--hemoprotein reductase). Exhibits catalytic activity for the formation of hydroxyestrogens from 17beta-estradiol (E2), namely 2- and 4-hydroxy E2. Metabolizes testosterone and progesterone to B or D ring hydroxylated metabolites. May act as a major enzyme for all-trans retinoic acid biosynthesis in extrahepatic tissues. Catalyzes two successive oxidative transformation of all-trans retinol to all-trans retinal and then to the active form all-trans retinoic acid. Catalyzes the epoxidation of double bonds of certain PUFA. Converts arachidonic acid toward epoxyeicosatrienoic acid (EpETrE) regioisomers, 8,9-, 11,12-, and 14,15- EpETrE, that function as lipid mediators in the vascular system. Additionally, displays dehydratase activity toward oxygenated eicosanoids hydroperoxyeicosatetraenoates (HpETEs). This activity is independent of cytochrome P450 reductase, NADPH, and O2. Also involved in the oxidative metabolism of xenobiotics, particularly converting polycyclic aromatic hydrocarbons and heterocyclic aryl amines procarcinogens to DNA-damaging products. Plays an important role in retinal vascular development. Under ambient/hyperoxic O2 conditions, promotes angiogenesis and capillary morphogenesis of retinal endothelial cells and pericytes, likely by metabolizing the oxygenated products symptomatic of oxidative stress. Also, contributes to oxidative homeostasis and ultrastructural organization and function of trabecular meshwork tissue through modulation of POSTN expression. This chain is Cytochrome P450 1B1, found in Mus musculus (Mouse).